The primary structure comprises 420 residues: DNA repair protein RadA (420 aa).

An ATP-binding site is contributed by 62–69 (GDPGIGKS). Positions 218 to 222 (KNRFG) match the RadA KNRFG motif motif. The lon-protease-like stretch occupies residues 317–420 (DAYLKSAGGV…IQEVLKKVFA (104 aa)).

The protein belongs to the RecA family. RadA subfamily.

Plays a role in repairing double-strand DNA breaks, probably involving stabilizing or processing branched DNA or blocked replication forks. Required for efficient transformation with chromosomal (linear) DNA, but not for replicative plasmid DNA. Its increased sensitivity to a DNA damaging agent suggests it may be required for DNA repair. This Streptococcus pneumoniae (strain ATCC BAA-255 / R6) protein is DNA repair protein RadA.